Consider the following 221-residue polypeptide: Histidine biosynthesis bifunctional protein HisIE (221 aa).

The phosphoribosyl-AMP cyclohydrolase stretch occupies residues 1–121 (MNITKIDWQK…KKQQFANWAW (121 aa)). Residues 122–221 (FIKLEQHLKE…IGLHPEGGNK (100 aa)) are phosphoribosyl-ATP pyrophosphohydrolase.

This sequence in the N-terminal section; belongs to the PRA-CH family. In the C-terminal section; belongs to the PRA-PH family.

It is found in the cytoplasm. It catalyses the reaction 1-(5-phospho-beta-D-ribosyl)-ATP + H2O = 1-(5-phospho-beta-D-ribosyl)-5'-AMP + diphosphate + H(+). It carries out the reaction 1-(5-phospho-beta-D-ribosyl)-5'-AMP + H2O = 1-(5-phospho-beta-D-ribosyl)-5-[(5-phospho-beta-D-ribosylamino)methylideneamino]imidazole-4-carboxamide. The protein operates within amino-acid biosynthesis; L-histidine biosynthesis; L-histidine from 5-phospho-alpha-D-ribose 1-diphosphate: step 2/9. It participates in amino-acid biosynthesis; L-histidine biosynthesis; L-histidine from 5-phospho-alpha-D-ribose 1-diphosphate: step 3/9. The chain is Histidine biosynthesis bifunctional protein HisIE (hisI) from Haemophilus influenzae (strain ATCC 51907 / DSM 11121 / KW20 / Rd).